The sequence spans 1077 residues: Ubiquitin carboxyl-terminal hydrolase 28 (1077 aa).

Positions 60 to 80 (DERVKEPSQDTVATEPSEVEG) are disordered. S67 is subject to Phosphoserine. The 20-residue stretch at 97-116 (DNKDDLQAAIALSLLESPKI) folds into the UIM domain. A Glycyl lysine isopeptide (Lys-Gly) (interchain with G-Cter in SUMO2) cross-link involves residue K99. A USP domain is found at 162 to 650 (VGLKNVGNTC…SAYCLMYIND (489 aa)). C171 serves as the catalytic Nucleophile. S375 is subject to Phosphoserine. A disordered region spans residues 477 to 535 (HCSVSDQTSKESTSTESSSQDVESTFSSPEDSLPKSKPLTSSRSSMEMPSQPAPRTVTD). Residues 481–501 (SDQTSKESTSTESSSQDVEST) show a composition bias toward low complexity. Over residues 514–524 (PLTSSRSSMEM) the composition is skewed to polar residues. Phosphoserine is present on S550. The Proton acceptor role is filled by H600. The segment at 697 to 728 (EEQSCKIPQMESSTNSSSQDYSTSQEPSVASS) is disordered. Low complexity predominate over residues 707-724 (ESSTNSSSQDYSTSQEPS). S714 bears the Phosphoserine mark. Residue K759 forms a Glycyl lysine isopeptide (Lys-Gly) (interchain with G-Cter in SUMO2) linkage. T1048 carries the phosphothreonine modification.

The protein belongs to the peptidase C19 family. USP28 subfamily. Interacts with ZNF304. Interacts with PRKD1. Interacts with TP53BP1. Interacts with isoform 1 of FBXW7; following DNA damage, dissociates from FBXW7 leading to degradation of MYC. In terms of processing, degraded upon nickel ion level or hypoxia exposure. Phosphorylated upon DNA damage at Ser-67 and Ser-714, by ATM or ATR. Phosphorylated by PRKD1.

It localises to the nucleus. The protein localises to the nucleoplasm. It catalyses the reaction Thiol-dependent hydrolysis of ester, thioester, amide, peptide and isopeptide bonds formed by the C-terminal Gly of ubiquitin (a 76-residue protein attached to proteins as an intracellular targeting signal).. In terms of biological role, deubiquitinase involved in DNA damage response checkpoint and MYC proto-oncogene stability. Involved in DNA damage induced apoptosis by specifically deubiquitinating proteins of the DNA damage pathway such as CLSPN. Also involved in G2 DNA damage checkpoint, by deubiquitinating CLSPN, and preventing its degradation by the anaphase promoting complex/cyclosome (APC/C). In contrast, it does not deubiquitinate PLK1. Specifically deubiquitinates MYC in the nucleoplasm, leading to prevent MYC degradation by the proteasome: acts by specifically interacting with isoform 1 of FBXW7 (FBW7alpha) in the nucleoplasm and counteracting ubiquitination of MYC by the SCF(FBW7) complex. In contrast, it does not interact with isoform 4 of FBXW7 (FBW7gamma) in the nucleolus, allowing MYC degradation and explaining the selective MYC degradation in the nucleolus. Deubiquitinates ZNF304, hence preventing ZNF304 degradation by the proteasome and leading to the activated KRAS-mediated promoter hypermethylation and transcriptional silencing of tumor suppressor genes (TSGs) in a subset of colorectal cancers (CRC) cells. The protein is Ubiquitin carboxyl-terminal hydrolase 28 (USP28) of Homo sapiens (Human).